A 238-amino-acid chain; its full sequence is Isoprene-epoxide--glutathione S-transferase (238 aa).

One can recognise a GST N-terminal domain in the interval 7–82 (YVPAWGIPDI…YLKNKFGDKL (76 aa)). One can recognise a GST C-terminal domain in the interval 118-238 (DAGWETYIPF…LERIRKQYDI (121 aa)).

Belongs to the GST superfamily. In terms of assembly, homodimer.

It catalyses the reaction 2-glutathionyl-2-methylbut-3-en-1-ol = (3R)-3,4-epoxy-3-methylbut-1-ene + glutathione. With respect to regulation, activity is inhibited by 1,2-epoxyhexane. In terms of biological role, involved in isoprene degradation. Catalyzes the glutathione-dependent ring opening of various epoxides. The highest conversion rate is observed with the physiological substrate, 3,4-epoxy-3-methyl-1-butene, which is the primary oxidation product of isoprene. It can also use other epoxides, including epoxyethane, epoxypropane, epithiopropane, epichlorohydrin, epifluorohydrin, epibromohydrin, 1,2-epoxybutane, 1,2-epoxyhexane, cis-2,3-epoxybutane, cis-1,2-dichloroepoxyethane and trans-1,2-dichloroepoxyethane. The polypeptide is Isoprene-epoxide--glutathione S-transferase (Rhodococcus sp. (strain AD45)).